The sequence spans 201 residues: Small ribosomal subunit protein uS4c (201 aa).

The interval 15–44 (LGALPGLTSKRPRSGSDLRNQSRSGKKSQY) is disordered. The S4 RNA-binding domain occupies 89–150 (MRLDNILFRL…EQRSRALIQN (62 aa)).

Belongs to the universal ribosomal protein uS4 family. In terms of assembly, part of the 30S ribosomal subunit. Contacts protein S5. The interaction surface between S4 and S5 is involved in control of translational fidelity.

It localises to the plastid. It is found in the chloroplast. Its function is as follows. One of the primary rRNA binding proteins, it binds directly to 16S rRNA where it nucleates assembly of the body of the 30S subunit. Functionally, with S5 and S12 plays an important role in translational accuracy. This is Small ribosomal subunit protein uS4c (rps4) from Calycanthus floridus var. glaucus (Eastern sweetshrub).